Consider the following 329-residue polypeptide: Phospholipid scramblase 4 (329 aa).

The interval 1–51 (MSGVVPTAPEQPAGEMENQTKPPDPRPDAPPEYNSHFLPGPPGTAVPPPTG) is disordered. The interval 1–98 (MSGVVPTAPE…PMPNQSVPIT (98 aa)) is proline-rich domain (PRD). Residues 1–303 (MSGVVPTAPE…IHFPLDLDVK (303 aa)) lie on the Cytoplasmic side of the membrane. Positions 18–25 (NQTKPPDP) match the SH3-binding 1 motif. Positions 30 to 33 (PPEY) match the PPxY motif motif. Positions 39–51 (PGPPGTAVPPPTG) are enriched in pro residues. The SH3-binding 2 motif lies at 41-49 (PPGTAVPPP). Residues Tyr-83 and Tyr-88 each carry the phosphotyrosine; by ABL modification. An SH3-binding 3 motif is present at residues 98-106 (TWMPGPTPM). Residues Cys-197, Cys-198, Cys-199, Cys-201, and Cys-202 are each lipidated (S-palmitoyl cysteine). The Nuclear localization signal motif lies at 271-283 (NIGSIIRKWNGLL). Residues 304–320 (MKAMIFGACFLIDFMYF) form a helical membrane-spanning segment. Over 321-329 (ERSPPQRSR) the chain is Extracellular.

Belongs to the phospholipid scramblase family. As to quaternary structure, interacts with PDCD6. Interacts with KPNA2; this interaction mediates the nucleus import of PLSCR4. The cofactor is Ca(2+). It depends on Mg(2+) as a cofactor. Requires Zn(2+) as cofactor. Expressed in heart, brain, placenta, lung, liver, kidney, pancreas, spleen, thymus, prostate, testis, uterus, small intestine and colon. Not detected in peripheral blood lymphocytes.

The protein localises to the cell membrane. The protein resides in the nucleus. It catalyses the reaction a 1,2-diacyl-sn-glycero-3-phosphocholine(in) = a 1,2-diacyl-sn-glycero-3-phosphocholine(out). It carries out the reaction a 1,2-diacyl-sn-glycero-3-phospho-L-serine(in) = a 1,2-diacyl-sn-glycero-3-phospho-L-serine(out). Catalyzes metal ion-induced ATP-independent rapid bidirectional and non-specific movement of phospholipids (lipid scrambling or lipid flip-flop) between the inner and outer leaflet of the plasma membrane and participates in the redistribution of phospholipids between membrane leaflets. Metal ions bind to the calcium-binding site and induce conformation change in the protein. Has a greater affi nity for Ca(2+) than Mg(2+) and Zn(2+). This is Phospholipid scramblase 4 from Homo sapiens (Human).